The sequence spans 529 residues: MEQSFLPIRCALISVSDKTGIFSLAKNLIKHKVKLITTSGTYKYLLEKGIFSTSVSEYINHPEIINGRVKTLHPKIHGGILSNNKNINENKNLNIKKIDMVITNFYPFKKKVKKENIKIENIIDNIDIGGVALARSAAKNYKYVTVVVNINQYSKLSSEMDKNSGSVSFKTRFYFSTLAFQYSYSYDKEIFNYFNKIYFKEIELKKNLKNKKFPELFSISFSKKEDVLYGENYHQKAAFYTDPVIHPGTVPFSIQRQGKKLSYNNIVDSDIAINCVMNFSEIACVIVKHSTPCGVSSGKNIIDAYRSAYYSDPDSAFGGIISFNRPLTIEAAEFIINKQFVEIIIAPVIEKDALLTLKSKSKIIVLECGYLSKNFLLNFKKVNCGLLLQDSDNKILKEKDIKIVSKRQPSKLEIESSIFIWKIIKFIKSNAIIYGKNKRTLGIGSGQTSRIFSTRIAAYKAIDQGFSLKGSVMASDAFFPFRDSIDFASKFGVSCIIQPGGSINDDKIISAVDENNMSMIFTNTRQFSH.

Positions 1-148 (MEQSFLPIRC…KNYKYVTVVV (148 aa)) constitute an MGS-like domain.

It belongs to the PurH family.

It catalyses the reaction (6R)-10-formyltetrahydrofolate + 5-amino-1-(5-phospho-beta-D-ribosyl)imidazole-4-carboxamide = 5-formamido-1-(5-phospho-D-ribosyl)imidazole-4-carboxamide + (6S)-5,6,7,8-tetrahydrofolate. The enzyme catalyses IMP + H2O = 5-formamido-1-(5-phospho-D-ribosyl)imidazole-4-carboxamide. The protein operates within purine metabolism; IMP biosynthesis via de novo pathway; 5-formamido-1-(5-phospho-D-ribosyl)imidazole-4-carboxamide from 5-amino-1-(5-phospho-D-ribosyl)imidazole-4-carboxamide (10-formyl THF route): step 1/1. It participates in purine metabolism; IMP biosynthesis via de novo pathway; IMP from 5-formamido-1-(5-phospho-D-ribosyl)imidazole-4-carboxamide: step 1/1. In Wigglesworthia glossinidia brevipalpis, this protein is Bifunctional purine biosynthesis protein PurH.